A 98-amino-acid polypeptide reads, in one-letter code: Nuclear protein 2 (98 aa).

Positions 1–11 are enriched in low complexity; the sequence is MEPAAPTVQPR. Disordered stretches follow at residues 1–24 and 78–98; these read MEPA…PPVG and LNSQ…TRLT. The span at 81 to 98 shows a compositional bias: basic residues; the sequence is QRKRRQRQLQPRPRTRLT.

It belongs to the NUPR family.

The protein localises to the nucleus. In terms of biological role, acts as a transcriptional repressor by inhibiting gene expression at the NUPR1 promoter in a p53/TP53-dependent manner in cancer cells. Involved in the G1 cell cycle arrest, and in a decrease in cell viability and cell proliferation. Plays a role as a negative regulator of the protumoral factor NUPR1. The polypeptide is Nuclear protein 2 (Bos taurus (Bovine)).